The following is a 438-amino-acid chain: Sphingomyelinase phosphodiesterase D (438 aa).

Positions 1 to 17 (MKIILILVLVLVVSINA) are cleaved as a signal peptide. Residues Asp-27 and His-29 each coordinate Zn(2+). N-linked (GlcNAc...) asparagine glycosylation occurs at Asn-40. Zn(2+)-binding residues include Asp-111 and Asn-148. Asn-160 is a glycosylation site (N-linked (GlcNAc...) asparagine). His-247 serves as a coordination point for Zn(2+). Asn-271 carries N-linked (GlcNAc...) asparagine glycosylation. Residues His-287 and His-289 each contribute to the Zn(2+) site. N-linked (GlcNAc...) asparagine glycosylation is found at Asn-338 and Asn-359.

Belongs to the acid sphingomyelinase family. Zn(2+) is required as a cofactor.

It localises to the secreted. The protein is Sphingomyelinase phosphodiesterase D (sgmD) of Dictyostelium discoideum (Social amoeba).